Reading from the N-terminus, the 140-residue chain is Large-conductance mechanosensitive channel (140 aa).

A run of 2 helical transmembrane segments spans residues 11–31 and 82–102; these read FAMR…GAFG and GNFI…FLLV.

It belongs to the MscL family. As to quaternary structure, homopentamer.

It is found in the cell inner membrane. Its function is as follows. Channel that opens in response to stretch forces in the membrane lipid bilayer. May participate in the regulation of osmotic pressure changes within the cell. The polypeptide is Large-conductance mechanosensitive channel (Parabacteroides distasonis (strain ATCC 8503 / DSM 20701 / CIP 104284 / JCM 5825 / NCTC 11152)).